Consider the following 521-residue polypeptide: Alkyl hydroperoxide reductase subunit F (521 aa).

Residue Lys-53 is modified to N6-acetyllysine. Position 214–229 (214–229) interacts with FAD; it reads DVLIVGSGPAGAAAAI. Cys-345 and Cys-348 are disulfide-bonded. Lys-354 is modified (N6-acetyllysine). Position 357-371 (357-371) interacts with NAD(+); that stretch reads RVAVIGGGNSGVEAA. An FAD-binding site is contributed by 478-488; it reads TNVKGVFAAGD.

The protein belongs to the class-II pyridine nucleotide-disulfide oxidoreductase family. Homodimer. The cofactor is FAD.

In terms of biological role, serves to protect the cell against DNA damage by alkyl hydroperoxides. It can use either NADH or NADPH as electron donor for direct reduction of redox dyes or of alkyl hydroperoxides when combined with the AhpC protein. This chain is Alkyl hydroperoxide reductase subunit F (ahpF), found in Escherichia coli (strain K12).